The sequence spans 365 residues: Chloroplast protein FOR GROWTH AND FERTILITY 1 (365 aa).

2 disordered regions span residues 1 to 30 (MERL…LPRL) and 62 to 90 (YTPI…PGFL). Residues 1-79 (MERLLQPSSS…TNNSFNGSPK (79 aa)) constitute a chloroplast transit peptide. 2 stretches are compositionally biased toward low complexity: residues 7 to 24 (PSSS…SRTS) and 62 to 77 (YTPI…FNGS). 7 helical membrane-spanning segments follow: residues 109–129 (VILI…PPAF), 139–159 (GWLT…LSGP), 182–202 (ALWG…FLLL), 218–238 (IVGL…SEIP), 274–294 (GVVH…LALP), 301–321 (AFLI…TAFI), and 345–365 (LVAI…FSLY).

Mostly expressed in leaves and flowers, to a lower extent, in stems, roots, floral bud, inflorescence and siliques, and, barely, in seedlings.

It localises to the plastid. The protein resides in the chloroplast membrane. The protein localises to the plastid membrane. In terms of biological role, together with CGF2, essential protein which supports female gametogenesis and embryogenesis, probably by securing local energy supply. This chain is Chloroplast protein FOR GROWTH AND FERTILITY 1, found in Arabidopsis thaliana (Mouse-ear cress).